We begin with the raw amino-acid sequence, 343 residues long: Uroporphyrinogen decarboxylase (343 aa).

Residues 25-29, phenylalanine 44, aspartate 75, tyrosine 150, serine 205, and histidine 320 contribute to the substrate site; that span reads RQAGR.

The protein belongs to the uroporphyrinogen decarboxylase family. As to quaternary structure, homodimer.

The protein resides in the cytoplasm. It carries out the reaction uroporphyrinogen III + 4 H(+) = coproporphyrinogen III + 4 CO2. It participates in porphyrin-containing compound metabolism; protoporphyrin-IX biosynthesis; coproporphyrinogen-III from 5-aminolevulinate: step 4/4. Catalyzes the decarboxylation of four acetate groups of uroporphyrinogen-III to yield coproporphyrinogen-III. The polypeptide is Uroporphyrinogen decarboxylase (Mesorhizobium japonicum (strain LMG 29417 / CECT 9101 / MAFF 303099) (Mesorhizobium loti (strain MAFF 303099))).